A 560-amino-acid polypeptide reads, in one-letter code: Dihydroxy-acid dehydratase (560 aa).

Mg(2+) is bound at residue Asp78. Position 119 (Cys119) interacts with [2Fe-2S] cluster. The Mg(2+) site is built by Asp120 and Lys121. Residue Lys121 is modified to N6-carboxylysine. Cys192 serves as a coordination point for [2Fe-2S] cluster. Glu446 contributes to the Mg(2+) binding site. The active-site Proton acceptor is the Ser472.

Belongs to the IlvD/Edd family. Homodimer. It depends on [2Fe-2S] cluster as a cofactor. Requires Mg(2+) as cofactor.

It catalyses the reaction (2R)-2,3-dihydroxy-3-methylbutanoate = 3-methyl-2-oxobutanoate + H2O. It carries out the reaction (2R,3R)-2,3-dihydroxy-3-methylpentanoate = (S)-3-methyl-2-oxopentanoate + H2O. It participates in amino-acid biosynthesis; L-isoleucine biosynthesis; L-isoleucine from 2-oxobutanoate: step 3/4. The protein operates within amino-acid biosynthesis; L-valine biosynthesis; L-valine from pyruvate: step 3/4. Its function is as follows. Functions in the biosynthesis of branched-chain amino acids. Catalyzes the dehydration of (2R,3R)-2,3-dihydroxy-3-methylpentanoate (2,3-dihydroxy-3-methylvalerate) into 2-oxo-3-methylpentanoate (2-oxo-3-methylvalerate) and of (2R)-2,3-dihydroxy-3-methylbutanoate (2,3-dihydroxyisovalerate) into 2-oxo-3-methylbutanoate (2-oxoisovalerate), the penultimate precursor to L-isoleucine and L-valine, respectively. This chain is Dihydroxy-acid dehydratase, found in Anaeromyxobacter dehalogenans (strain 2CP-1 / ATCC BAA-258).